Consider the following 408-residue polypeptide: Arginine biosynthesis bifunctional protein ArgJ (408 aa).

Substrate is bound by residues threonine 158, lysine 184, threonine 195, glutamate 281, asparagine 403, and threonine 408. Threonine 195 serves as the catalytic Nucleophile.

It belongs to the ArgJ family. Heterotetramer of two alpha and two beta chains.

Its subcellular location is the cytoplasm. The enzyme catalyses N(2)-acetyl-L-ornithine + L-glutamate = N-acetyl-L-glutamate + L-ornithine. It carries out the reaction L-glutamate + acetyl-CoA = N-acetyl-L-glutamate + CoA + H(+). It functions in the pathway amino-acid biosynthesis; L-arginine biosynthesis; L-ornithine and N-acetyl-L-glutamate from L-glutamate and N(2)-acetyl-L-ornithine (cyclic): step 1/1. The protein operates within amino-acid biosynthesis; L-arginine biosynthesis; N(2)-acetyl-L-ornithine from L-glutamate: step 1/4. Catalyzes two activities which are involved in the cyclic version of arginine biosynthesis: the synthesis of N-acetylglutamate from glutamate and acetyl-CoA as the acetyl donor, and of ornithine by transacetylation between N(2)-acetylornithine and glutamate. The sequence is that of Arginine biosynthesis bifunctional protein ArgJ from Bacillus cereus (strain ZK / E33L).